The following is a 166-amino-acid chain: Ribosome maturation factor RimM (166 aa).

Residues 94 to 166 (EGEYYHADLI…IVIEAAYADQ (73 aa)) form the PRC barrel domain.

It belongs to the RimM family. As to quaternary structure, binds ribosomal protein uS19.

The protein resides in the cytoplasm. Functionally, an accessory protein needed during the final step in the assembly of 30S ribosomal subunit, possibly for assembly of the head region. Essential for efficient processing of 16S rRNA. May be needed both before and after RbfA during the maturation of 16S rRNA. It has affinity for free ribosomal 30S subunits but not for 70S ribosomes. This is Ribosome maturation factor RimM from Novosphingobium aromaticivorans (strain ATCC 700278 / DSM 12444 / CCUG 56034 / CIP 105152 / NBRC 16084 / F199).